The sequence spans 1273 residues: DNA-directed RNA polymerase subunit beta (1273 aa).

The protein belongs to the RNA polymerase beta chain family. In terms of assembly, the RNAP catalytic core consists of 2 alpha, 1 beta, 1 beta' and 1 omega subunit. When a sigma factor is associated with the core the holoenzyme is formed, which can initiate transcription.

It catalyses the reaction RNA(n) + a ribonucleoside 5'-triphosphate = RNA(n+1) + diphosphate. Functionally, DNA-dependent RNA polymerase catalyzes the transcription of DNA into RNA using the four ribonucleoside triphosphates as substrates. The chain is DNA-directed RNA polymerase subunit beta from Phytoplasma mali (strain AT).